Consider the following 282-residue polypeptide: Caspase-3 (282 aa).

Residues His-131 and Cys-174 contribute to the active site.

This sequence belongs to the peptidase C14A family. In terms of assembly, heterotetramer that consists of two anti-parallel arranged heterodimers, each one formed by a 17 kDa (p17) and a 12 kDa (p12) subunit.

It localises to the cytoplasm. It carries out the reaction Strict requirement for an Asp residue at positions P1 and P4. It has a preferred cleavage sequence of Asp-Xaa-Xaa-Asp-|- with a hydrophobic amino-acid residue at P2 and a hydrophilic amino-acid residue at P3, although Val or Ala are also accepted at this position.. In terms of biological role, important mediator of apoptosis. At the onset of apoptosis, it proteolytically cleaves poly(ADP-ribose) polymerase PARP1 at a '216-Asp-|-Gly-217' bond. In Xenopus laevis (African clawed frog), this protein is Caspase-3 (casp3).